Here is a 178-residue protein sequence, read N- to C-terminus: Orotate phosphoribosyltransferase (178 aa).

5-phospho-alpha-D-ribose 1-diphosphate is bound by residues Arg-92, Lys-93, Lys-96, and 118–126; that span reads EDVITTGSS. 2 residues coordinate orotate: Thr-122 and Arg-150.

Belongs to the purine/pyrimidine phosphoribosyltransferase family. PyrE subfamily. In terms of assembly, homodimer. Requires Mg(2+) as cofactor.

The enzyme catalyses orotidine 5'-phosphate + diphosphate = orotate + 5-phospho-alpha-D-ribose 1-diphosphate. It participates in pyrimidine metabolism; UMP biosynthesis via de novo pathway; UMP from orotate: step 1/2. Catalyzes the transfer of a ribosyl phosphate group from 5-phosphoribose 1-diphosphate to orotate, leading to the formation of orotidine monophosphate (OMP). The sequence is that of Orotate phosphoribosyltransferase from Archaeoglobus fulgidus (strain ATCC 49558 / DSM 4304 / JCM 9628 / NBRC 100126 / VC-16).